The following is a 331-amino-acid chain: C4-dicarboxylate-binding periplasmic protein DctP (331 aa).

An N-terminal signal peptide occupies residues 1–23 (MLKHTAKALVCALSLTVAGIVQA).

This sequence belongs to the bacterial solute-binding protein 7 family. As to quaternary structure, the complex comprises the extracytoplasmic solute receptor protein DctP, and the two transmembrane proteins DctQ and DctM.

It is found in the periplasm. Functionally, part of the tripartite ATP-independent periplasmic (TRAP) transport system DctPQM involved in C4-dicarboxylates uptake. The polypeptide is C4-dicarboxylate-binding periplasmic protein DctP (Pseudomonas aeruginosa (strain ATCC 15692 / DSM 22644 / CIP 104116 / JCM 14847 / LMG 12228 / 1C / PRS 101 / PAO1)).